Here is a 70-residue protein sequence, read N- to C-terminus: uncharacterized protein (70 aa).

This is an uncharacterized protein from Thermoproteus tenax virus 1 (strain KRA1) (TTV1).